The sequence spans 327 residues: MCHQKLTISWFAVVLLASPLMAIWELEKDVYVVEVDWSPDAAGERVVLTCDTSEEDDIIWTSDKNSEAVGSGKTLTIQVKEFSNAGQYTCHKGGKTLSHSRLLLHKKENGIWSTDILKDQKDPKNKTFLKCEAANYSGRFTCWWLTAISTDLKFNVKSSSSSSDSRAVTCGAASLSAEKVTVDRKDYQKYSVACQEDITCPTAEETLPIGLVMEAQHKYKYENYSTGFFIRDIIKPDPPKNLQLKPLRGSQMELSWEYPDSWSTPHSYFSLKFHVQVHRKRERKDESQFVDKTSATIRCSKGAEVRVRAQDHYYNSSWSRWVSVPCS.

The N-terminal stretch at 1-22 (MCHQKLTISWFAVVLLASPLMA) is a signal peptide. Residues 23 to 106 (IWELEKDVYV…LSHSRLLLHK (84 aa)) enclose the Ig-like C2-type domain. The cysteines at positions 50 and 90 are disulfide-linked. N-linked (GlcNAc...) asparagine glycosylation is found at Asn125, Asn135, Asn223, and Asn315. In terms of domain architecture, Fibronectin type-III spans 238–327 (PPKNLQLKPL…WSRWVSVPCS (90 aa)).

The protein belongs to the IL-12B family. As to quaternary structure, heterodimer with IL12A; disulfide-linked. The heterodimer is known as interleukin IL-12. Heterodimer with IL23A; disulfide-linked. The heterodimer is known as interleukin IL-23. Also secreted as a monomer. Interacts with NBR1; this interaction promotes IL-12 secretion.

It localises to the secreted. Its function is as follows. Cytokine that can act as a growth factor for activated T and NK cells, enhance the lytic activity of NK/lymphokine-activated killer cells, and stimulate the production of IFN-gamma by resting PBMC. In terms of biological role, associates with IL23A to form the IL-23 interleukin, a heterodimeric cytokine which functions in innate and adaptive immunity. IL-23 may constitute with IL-17 an acute response to infection in peripheral tissues. IL-23 binds to a heterodimeric receptor complex composed of IL12RB1 and IL23R, activates the Jak-Stat signaling cascade, stimulates memory rather than naive T-cells and promotes production of pro-inflammatory cytokines. IL-23 induces autoimmune inflammation and thus may be responsible for autoimmune inflammatory diseases and may be important for tumorigenesis. The chain is Interleukin-12 subunit beta (IL12B) from Mesocricetus auratus (Golden hamster).